The primary structure comprises 573 residues: Urease subunit alpha (573 aa).

The 438-residue stretch at 136–573 (GGIDCHVHFI…LPMAQRYFLF (438 aa)) folds into the Urease domain. Residues His-141, His-143, and Lys-224 each coordinate Ni(2+). An N6-carboxylysine modification is found at Lys-224. His-226 provides a ligand contact to substrate. His-253 and His-279 together coordinate Ni(2+). His-327 functions as the Proton donor in the catalytic mechanism. A Ni(2+)-binding site is contributed by Asp-367.

Belongs to the metallo-dependent hydrolases superfamily. Urease alpha subunit family. In terms of assembly, heterotrimer of UreA (gamma), UreB (beta) and UreC (alpha) subunits. Three heterotrimers associate to form the active enzyme. Requires Ni cation as cofactor. In terms of processing, carboxylation allows a single lysine to coordinate two nickel ions.

Its subcellular location is the cytoplasm. The enzyme catalyses urea + 2 H2O + H(+) = hydrogencarbonate + 2 NH4(+). It functions in the pathway nitrogen metabolism; urea degradation; CO(2) and NH(3) from urea (urease route): step 1/1. The chain is Urease subunit alpha from Rhodococcus opacus (strain B4).